A 48-amino-acid chain; its full sequence is Delta-stichotoxin-Hcr1e (48 aa).

Disulfide bonds link cysteine 3/cysteine 43, cysteine 5/cysteine 33, and cysteine 26/cysteine 44.

This sequence belongs to the sea anemone sodium channel inhibitory toxin family. Type II subfamily.

It is found in the secreted. Its subcellular location is the nematocyst. Its function is as follows. Binds to site 3 of voltage-gated sodium channels and inhibits the inactivation process. The chain is Delta-stichotoxin-Hcr1e from Radianthus crispa (Leathery sea anemone).